A 167-amino-acid polypeptide reads, in one-letter code: Osteocalcin 2a (167 aa).

The first 18 residues, 1–18, serve as a signal peptide directing secretion; that stretch reads MKSLTLLTICAVLSVSLS. A propeptide spanning residues 19–118 is cleaved from the precursor; sequence MNDLALDVVL…LASVLLRRKR (100 aa). A disordered region spans residues 28–99; it reads LDPAPDPATE…TTEDPAAATE (72 aa). Over residues 38-87 the composition is skewed to low complexity; it reads PAPAADSSASSSASSSSSSASDSSASASDSSDSDSSSASSSSSSSESASA. Residues 131 to 163 form the Gla domain; sequence QVESLSEVCELNLACEHMAETAGIVAAYTAYYG. Ca(2+) is bound by residues E133, E137, and E140. 4-carboxyglutamate is present on residues E133, E137, and E140. An intrachain disulfide couples C139 to C145.

Belongs to the osteocalcin/matrix Gla protein family. Post-translationally, gamma-carboxyglutamate residues are formed by vitamin K dependent carboxylation. These residues are essential for the binding of calcium.

It is found in the secreted. Functionally, binds strongly to apatite and calcium. The protein is Osteocalcin 2a of Oncorhynchus mykiss (Rainbow trout).